Here is a 63-residue protein sequence, read N- to C-terminus: MLTLKKSMLLLFFLGTINLSLCEQERDADEEERRDDDEMDVEVEKRFLPLFLPKIICVITKKC.

Residues 1 to 22 form the signal peptide; the sequence is MLTLKKSMLLLFFLGTINLSLC. Positions 23–44 are excised as a propeptide; sequence EQERDADEEERRDDDEMDVEVE. An intrachain disulfide couples C57 to C63.

In terms of tissue distribution, expressed by the skin glands.

It localises to the secreted. In terms of biological role, the synthetic peptide has antimicrobial activity against Gram-negative bacterium B.dysenteriae (MIC=35 ug/ml), against Gram-positive bacteria S.aureus ATCC 2592 (MIC=4.7 ug/ml) and B.subtilis ATCC 6633 (MIC=9.38 ug/ml) and against fungus C.albicans (MIC=18.75 ug/ml). Has no activity against Gram-negative bacterium E.coli ATCC 25922 but exhibits low hemolytic activity at concentrations up to 200 ug/ml. The sequence is that of Jingdongin-1 from Amolops jingdongensis (Chinese torrent frog).